The sequence spans 501 residues: Chromosomal replication initiator protein DnaA (501 aa).

A domain I, interacts with DnaA modulators region spans residues 1-90; the sequence is MSVELWQQCV…KRSSAPRAAP (90 aa). A domain II region spans residues 91 to 164; the sequence is NAPLAAAASQ…QVEGALKHTS (74 aa). Residues 103 to 121 are compositionally biased toward low complexity; the sequence is AAPVASTPAPAPSKSSAKK. Residues 103–150 are disordered; that stretch reads AAPVASTPAPAPSKSSAKKNAAENEEPSRDSFDPMAGASSQQAPIRAE. Residues 122 to 134 show a composition bias toward basic and acidic residues; the sequence is NAAENEEPSRDSF. The tract at residues 165–381 is domain III, AAA+ region; the sequence is YLNRTFTFEN…GALKRVIAHS (217 aa). Residues Gly209, Gly211, Lys212, and Thr213 each contribute to the ATP site. Residues 382-501 are domain IV, binds dsDNA; it reads HFMGRDITIE…YKNLLRTLTT (120 aa).

Belongs to the DnaA family. In terms of assembly, oligomerizes as a right-handed, spiral filament on DNA at oriC.

The protein resides in the cytoplasm. Its function is as follows. Plays an essential role in the initiation and regulation of chromosomal replication. ATP-DnaA binds to the origin of replication (oriC) to initiate formation of the DNA replication initiation complex once per cell cycle. Binds the DnaA box (a 9 base pair repeat at the origin) and separates the double-stranded (ds)DNA. Forms a right-handed helical filament on oriC DNA; dsDNA binds to the exterior of the filament while single-stranded (ss)DNA is stabiized in the filament's interior. The ATP-DnaA-oriC complex binds and stabilizes one strand of the AT-rich DNA unwinding element (DUE), permitting loading of DNA polymerase. After initiation quickly degrades to an ADP-DnaA complex that is not apt for DNA replication. Binds acidic phospholipids. The protein is Chromosomal replication initiator protein DnaA of Pseudomonas fluorescens (strain SBW25).